The sequence spans 585 residues: Aspartate--tRNA ligase (585 aa).

Glu-173 provides a ligand contact to L-aspartate. Residues 197–200 (QTLK) are aspartate. Arg-219 contributes to the L-aspartate binding site. ATP contacts are provided by residues 219 to 221 (RDE) and Gln-228. His-446 provides a ligand contact to L-aspartate. Residue Glu-480 participates in ATP binding. L-aspartate is bound at residue Arg-487. An ATP-binding site is contributed by 532-535 (GLDR).

This sequence belongs to the class-II aminoacyl-tRNA synthetase family. Type 1 subfamily. Homodimer.

It is found in the cytoplasm. It carries out the reaction tRNA(Asp) + L-aspartate + ATP = L-aspartyl-tRNA(Asp) + AMP + diphosphate. Its function is as follows. Catalyzes the attachment of L-aspartate to tRNA(Asp) in a two-step reaction: L-aspartate is first activated by ATP to form Asp-AMP and then transferred to the acceptor end of tRNA(Asp). This chain is Aspartate--tRNA ligase, found in Bacteroides fragilis (strain ATCC 25285 / DSM 2151 / CCUG 4856 / JCM 11019 / LMG 10263 / NCTC 9343 / Onslow / VPI 2553 / EN-2).